The following is a 609-amino-acid chain: UvrABC system protein C (609 aa).

Residues 16–94 (SSAGVYRMYD…IKQYMPKYNV (79 aa)) enclose the GIY-YIG domain. A UVR domain is found at 203 to 238 (QQVISALVDKMELAAERQAYEQAARFRDQIMALRKV).

This sequence belongs to the UvrC family. As to quaternary structure, interacts with UvrB in an incision complex.

Its subcellular location is the cytoplasm. Functionally, the UvrABC repair system catalyzes the recognition and processing of DNA lesions. UvrC both incises the 5' and 3' sides of the lesion. The N-terminal half is responsible for the 3' incision and the C-terminal half is responsible for the 5' incision. This chain is UvrABC system protein C, found in Shewanella baltica (strain OS185).